The primary structure comprises 84 residues: Kunitz-type serine protease inhibitor B3 (84 aa).

Positions 1 to 24 are cleaved as a signal peptide; the sequence is MSSGGLLLLLGLLTLWAELTPISG. Positions 31 to 81 constitute a BPTI/Kunitz inhibitor domain; it reads CNLAPESGRCRGHLRRIYYNLESNKCEVFFYGGCGGNDNNFSTRDECRHTC. 3 cysteine pairs are disulfide-bonded: Cys31–Cys81, Cys40–Cys64, and Cys56–Cys77. N-linked (GlcNAc...) asparagine glycosylation is present at Asn70.

The protein belongs to the venom Kunitz-type family. Expressed by the venom gland.

Its subcellular location is the secreted. Functionally, serine protease inhibitor that inhibits plasmin and trypsin. The protein is Kunitz-type serine protease inhibitor B3 of Daboia siamensis (Eastern Russel's viper).